A 344-amino-acid chain; its full sequence is tRNA N6-adenosine threonylcarbamoyltransferase (344 aa).

Fe cation-binding residues include His-113 and His-117. Substrate is bound by residues 135–139 (LVSGG), Asp-169, Gly-182, Asp-186, and Asn-278. Position 306 (Asp-306) interacts with Fe cation. Positions 325–344 (ESPISVGTDPSLSVETPQVF) are disordered. The span at 326–344 (SPISVGTDPSLSVETPQVF) shows a compositional bias: polar residues.

Belongs to the KAE1 / TsaD family. Requires Fe(2+) as cofactor.

The protein localises to the cytoplasm. The enzyme catalyses L-threonylcarbamoyladenylate + adenosine(37) in tRNA = N(6)-L-threonylcarbamoyladenosine(37) in tRNA + AMP + H(+). Functionally, required for the formation of a threonylcarbamoyl group on adenosine at position 37 (t(6)A37) in tRNAs that read codons beginning with adenine. Is involved in the transfer of the threonylcarbamoyl moiety of threonylcarbamoyl-AMP (TC-AMP) to the N6 group of A37, together with TsaE and TsaB. TsaD likely plays a direct catalytic role in this reaction. In Corynebacterium glutamicum (strain ATCC 13032 / DSM 20300 / JCM 1318 / BCRC 11384 / CCUG 27702 / LMG 3730 / NBRC 12168 / NCIMB 10025 / NRRL B-2784 / 534), this protein is tRNA N6-adenosine threonylcarbamoyltransferase.